The sequence spans 261 residues: Putative hydro-lyase Sfum_3393 (261 aa).

It belongs to the D-glutamate cyclase family.

This Syntrophobacter fumaroxidans (strain DSM 10017 / MPOB) protein is Putative hydro-lyase Sfum_3393.